Here is a 555-residue protein sequence, read N- to C-terminus: GPI-anchor transamidase component PIGS (555 aa).

The Cytoplasmic segment spans residues 2–18 (ATAGAAATDLEVVRGKR). A cardiolipin contacts are provided by Arg-15 and Arg-18. A helical transmembrane segment spans residues 19-39 (AALFFAAVAILLGLPLWWKTT). Residues 40–517 (ETYRAPLPYS…LHLLYFPDDQ (478 aa)) are Lumenal-facing. Residues Asn-267 and Asn-370 are each glycosylated (N-linked (GlcNAc...) asparagine). A helical transmembrane segment spans residues 518–532 (KFAIYIPLFLPMAVP). The Cytoplasmic portion of the chain corresponds to 533–555 (ILLSLVKIFLETHKSWKKPEKID).

It belongs to the PIGS family. In terms of assembly, heteropentamer. Part of the GPI-anchor transamidase complex, consisting of PIGK, PIGT, PIGS, PIGU and GAA1.

It is found in the endoplasmic reticulum membrane. It functions in the pathway glycolipid biosynthesis; glycosylphosphatidylinositol-anchor biosynthesis. Its function is as follows. Component of the glycosylphosphatidylinositol-anchor (GPI-anchor) transamidase (GPI-T) complex that catalyzes the formation of the linkage between a proprotein and a GPI-anchor and participates in GPI anchored protein biosynthesis. The sequence is that of GPI-anchor transamidase component PIGS from Rattus norvegicus (Rat).